Here is a 64-residue protein sequence, read N- to C-terminus: Prokaryotic ubiquitin-like protein Pup (64 aa).

A disordered region spans residues 1–37 (MAQEQTKRGGGGGEDDDLTGSTAAGQERREKLTDETD). The tract at residues 21–58 (STAAGQERREKLTDETDDLLDEIDDVLEENAEDFVRAY) is ARC ATPase binding. Positions 23–52 (AAGQERREKLTDETDDLLDEIDDVLEENAE) form a coiled coil. Position 64 is a deamidated glutamine (glutamine 64). Glutamine 64 is covalently cross-linked (Isoglutamyl lysine isopeptide (Gln-Lys) (interchain with K-? in acceptor proteins)).

This sequence belongs to the prokaryotic ubiquitin-like protein family. In terms of assembly, strongly interacts with the proteasome-associated ATPase ARC through a hydrophobic interface; the interacting region of Pup lies in its C-terminal half. There is one Pup binding site per ARC hexamer ring. In terms of processing, is modified by deamidation of its C-terminal glutamine to glutamate by the deamidase Dop, a prerequisite to the subsequent pupylation process.

It participates in protein degradation; proteasomal Pup-dependent pathway. Functionally, protein modifier that is covalently attached to lysine residues of substrate proteins, thereby targeting them for proteasomal degradation. The tagging system is termed pupylation. The polypeptide is Prokaryotic ubiquitin-like protein Pup (Mycolicibacterium vanbaalenii (strain DSM 7251 / JCM 13017 / BCRC 16820 / KCTC 9966 / NRRL B-24157 / PYR-1) (Mycobacterium vanbaalenii)).